We begin with the raw amino-acid sequence, 237 residues long: Pyridoxine 5'-phosphate synthase (237 aa).

Residues N7 and R18 each contribute to the 3-amino-2-oxopropyl phosphate site. H43 functions as the Proton acceptor in the catalytic mechanism. 1-deoxy-D-xylulose 5-phosphate-binding residues include R45 and H50. Catalysis depends on E70, which acts as the Proton acceptor. T100 provides a ligand contact to 1-deoxy-D-xylulose 5-phosphate. H190 serves as the catalytic Proton donor. 3-amino-2-oxopropyl phosphate contacts are provided by residues D191 and 213–214 (GH).

The protein belongs to the PNP synthase family. In terms of assembly, homooctamer; tetramer of dimers.

The protein localises to the cytoplasm. It carries out the reaction 3-amino-2-oxopropyl phosphate + 1-deoxy-D-xylulose 5-phosphate = pyridoxine 5'-phosphate + phosphate + 2 H2O + H(+). The protein operates within cofactor biosynthesis; pyridoxine 5'-phosphate biosynthesis; pyridoxine 5'-phosphate from D-erythrose 4-phosphate: step 5/5. Its function is as follows. Catalyzes the complicated ring closure reaction between the two acyclic compounds 1-deoxy-D-xylulose-5-phosphate (DXP) and 3-amino-2-oxopropyl phosphate (1-amino-acetone-3-phosphate or AAP) to form pyridoxine 5'-phosphate (PNP) and inorganic phosphate. The sequence is that of Pyridoxine 5'-phosphate synthase from Bacteroides fragilis (strain ATCC 25285 / DSM 2151 / CCUG 4856 / JCM 11019 / LMG 10263 / NCTC 9343 / Onslow / VPI 2553 / EN-2).